The primary structure comprises 137 residues: Protein FrxA (137 aa).

The polypeptide is Protein FrxA (frxA) (Pyrococcus furiosus (strain ATCC 43587 / DSM 3638 / JCM 8422 / Vc1)).